The following is a 272-amino-acid chain: 3',5'-cyclic adenosine monophosphate phosphodiesterase CpdA (272 aa).

Fe cation is bound by residues aspartate 21, histidine 23, aspartate 63, asparagine 93, histidine 161, histidine 200, and histidine 202. AMP contacts are provided by residues histidine 23, aspartate 63, and 93–94 (NH). Residue histidine 202 participates in AMP binding.

It belongs to the cyclic nucleotide phosphodiesterase class-III family. Monomer. A divalent metal cation is required as a cofactor.

It catalyses the reaction 3',5'-cyclic AMP + H2O = AMP + H(+). Its activity is regulated as follows. Activated by iron. Other divalent metal ions have no effect. In terms of biological role, hydrolyzes cAMP to 5'-AMP. Plays an important regulatory role in modulating the intracellular concentration of cAMP, thereby influencing cAMP-dependent processes. Specifically required for regulation of virulence factors. Can also hydrolyze cGMP, but cGMP is unlikely to be synthesized by P.aeruginosa and cAMP is probably the biologically relevant substrate for CpdA in vivo. This Pseudomonas aeruginosa protein is 3',5'-cyclic adenosine monophosphate phosphodiesterase CpdA.